Here is a 137-residue protein sequence, read N- to C-terminus: Putative pre-16S rRNA nuclease (137 aa).

Belongs to the YqgF nuclease family.

It is found in the cytoplasm. Functionally, could be a nuclease involved in processing of the 5'-end of pre-16S rRNA. The sequence is that of Putative pre-16S rRNA nuclease from Clostridium kluyveri (strain NBRC 12016).